We begin with the raw amino-acid sequence, 307 residues long: MSSRYSPYRIRNVGERRRVQERLLSEFNSRPVTAVAAVCAVCLETYCVQSNNIIDFLMPSECTHLFCYKCVLNMYKNAMNVPRAAVSCPMCNKKVGTWQAFFPNSVVSCKFIKKTGDRTPACLQFMLALKTIQDRYMATEEEAETEPSFVIKNLQAQLDAAQKEARDLQESMERQKQAHNVAWNSSCEQVTALQTTLADMQAQLDRSEALSSTLAEHNRAANVQIDSLRRAVQRLEAAQSAPVSVNVEFNDNARQNTNLHERFRSYVYSTVSDMMIEDSIKSLQSHVFGAACLPCSVNVEINFPFDE.

The RING-type zinc finger occupies 39–92 (CAVCLETYCVQSNNIIDFLMPSECTHLFCYKCVLNMYKNAMNVPRAAVSCPMCN).

The chain is Major immediate early protein (PE38) from Orgyia pseudotsugata multicapsid polyhedrosis virus (OpMNPV).